A 189-amino-acid chain; its full sequence is UPF0149 protein VFMJ11_2207 (189 aa).

Belongs to the UPF0149 family.

The sequence is that of UPF0149 protein VFMJ11_2207 from Aliivibrio fischeri (strain MJ11) (Vibrio fischeri).